Reading from the N-terminus, the 510-residue chain is Calcium-dependent lipid-binding protein (510 aa).

The chain crosses the membrane as a helical span at residues 1-21 (MGLISGILFGIIFGVALMAGW). SMP-LTD domains are found at residues 66-248 (AFEQ…VPIG) and 66-250 (AFEQ…IGGI). The tract at residues 226–488 (DDTVDTIVKD…FMGRTITGQS (263 aa)) is phospholipid binding. 2 C2 domains span residues 242–362 (RIVV…ELEL) and 246–364 (PIGG…ELNL). Ca(2+)-binding residues include Lys278, Glu279, Asp285, Asp333, Lys334, Asp335, Asp339, and Glu340. Residues 390 to 417 (EFNKEEQMAALEDEKKIMEERKRLKEAG) are a coiled coil. A C2 3 domain is found at 461 to 500 (MVGSGFGAVGSGLSKAGRFMGRTITGQSSKRSGSSTPVNT). The tract at residues 484–510 (ITGQSSKRSGSSTPVNTVPENDGAKQQ) is disordered.

This sequence belongs to the synaptotagmin family. In terms of assembly, interacts with the biotrophic pathogenic fungi Microbotryum violaceum effector MVLG_01732. Requires Ca(2+) as cofactor. Mostly expressed in rosette leaves and flowers, to lower extent, in cauline leaves, roots and stems, and, at low levels, in siliques.

It localises to the nucleus membrane. Its function is as follows. May be involved in membrane trafficking. Acts as a repressor of abiotic stress (e.g. drought and salt) responses by binding specifically to the promoter of THAS1 to regulate its transcription. Binds to membrane lipid ceramides. The chain is Calcium-dependent lipid-binding protein from Arabidopsis thaliana (Mouse-ear cress).